An 84-amino-acid chain; its full sequence is ATP synthase subunit c (84 aa).

The next 2 helical transmembrane spans lie at 1 to 21 and 53 to 73; these read MLAW…ALVG and LLFA…VALI.

It belongs to the ATPase C chain family. In terms of assembly, F-type ATPases have 2 components, F(1) - the catalytic core - and F(0) - the membrane proton channel. F(1) has five subunits: alpha(3), beta(3), gamma(1), delta(1), epsilon(1). F(0) has three main subunits: a(1), b(2) and c(10-14). The alpha and beta chains form an alternating ring which encloses part of the gamma chain. F(1) is attached to F(0) by a central stalk formed by the gamma and epsilon chains, while a peripheral stalk is formed by the delta and b chains.

The protein localises to the cell inner membrane. Functionally, f(1)F(0) ATP synthase produces ATP from ADP in the presence of a proton or sodium gradient. F-type ATPases consist of two structural domains, F(1) containing the extramembraneous catalytic core and F(0) containing the membrane proton channel, linked together by a central stalk and a peripheral stalk. During catalysis, ATP synthesis in the catalytic domain of F(1) is coupled via a rotary mechanism of the central stalk subunits to proton translocation. In terms of biological role, key component of the F(0) channel; it plays a direct role in translocation across the membrane. A homomeric c-ring of between 10-14 subunits forms the central stalk rotor element with the F(1) delta and epsilon subunits. This Dictyoglomus thermophilum (strain ATCC 35947 / DSM 3960 / H-6-12) protein is ATP synthase subunit c.